The following is a 595-amino-acid chain: Sucrose transport protein SUT4 (595 aa).

Over 1 to 61 (MDSAAGGGGL…PAARTTTTRK (61 aa)) the chain is Cytoplasmic. The interval 29-55 (SLNGGTPRGGSPKDPDATHQQGPPAAR) is disordered. The helical transmembrane segment at 62-82 (LVLACMVAAGVQFGWALQLSL) threads the bilayer. The Extracellular portion of the chain corresponds to 83–97 (LTPYIQTLGIDHAMA). Residues 98 to 118 (SFIWLCGPITGFVVQPCVGVW) form a helical membrane-spanning segment. The Cytoplasmic segment spans residues 119 to 130 (SDKCRSKYGRRR). A helical transmembrane segment spans residues 131 to 151 (PFILAGCLMICFAVTLIGFSA). Topologically, residues 152–173 (DLGYILGDTTEHCSTYKGSRFR) are extracellular. Residues 174-194 (AAIIFVLGFWMLDLANNTVQG) traverse the membrane as a helical segment. At 195 to 213 (PARALLADLSGPDQCNSAN) the chain is on the cytoplasmic side. A helical transmembrane segment spans residues 214 to 234 (AIFCTWMAVGNVLGFSSGASG). At 235–256 (NWHKWFPFLMTRACCEACSNLK) the chain is on the extracellular side. The chain crosses the membrane as a helical span at residues 257-277 (AAFLVAVVFLLFCMSVTLYFA). Residues 278–365 (EEIPLEPTDA…LTSMRHLPPG (88 aa)) are Cytoplasmic-facing. The disordered stretch occupies residues 291 to 340 (SDSAPLLNGSRDDNNASNEPRNGALPNGHTDGSNVPANSNAEDSNSNREN). Positions 320–334 (TDGSNVPANSNAEDS) are enriched in polar residues. A helical membrane pass occupies residues 366 to 386 (MYSVLLVMALTWLSWFPFFLF). The Extracellular portion of the chain corresponds to 387 to 417 (DTDWMGREVYHGDPNGNLSERKAYDNGVREG). Asn-403 carries N-linked (GlcNAc...) asparagine glycosylation. Residues 418 to 438 (AFGLLLNSVVLGIGSFLVDPL) form a helical membrane-spanning segment. The Cytoplasmic portion of the chain corresponds to 439-447 (CRLMGARLV). The chain crosses the membrane as a helical span at residues 448 to 468 (WAISNFTVFICMLATAILSWI). The Extracellular portion of the chain corresponds to 469–491 (SFDLYSSKLHHIIGANKTVKNSA). The N-linked (GlcNAc...) asparagine glycan is linked to Asn-484. A helical transmembrane segment spans residues 492-512 (LIVFSLLGLPLSITYSVPFSV). The Cytoplasmic portion of the chain corresponds to 513–525 (TAELTAGTGGGQG). The chain crosses the membrane as a helical span at residues 526 to 546 (LATGVLNLAIVVPQIVVSLGA). The Extracellular segment spans residues 547-556 (GPWDALFGGG). A helical transmembrane segment spans residues 557-577 (NVPAFALASVFSLGAGVLAVL). At 578–595 (KLPKLPNSYRSAGFHGFG) the chain is on the cytoplasmic side.

The protein belongs to the glycoside-pentoside-hexuronide (GPH) cation symporter transporter (TC 2.A.2.4) family. In terms of assembly, homodimer.

The protein localises to the cell membrane. It functions in the pathway glycan biosynthesis; sucrose metabolism. Its function is as follows. Responsible for the transport of sucrose into the cell, with the concomitant uptake of protons (symport system). May also transport other glucosides. This Oryza sativa subsp. indica (Rice) protein is Sucrose transport protein SUT4 (SUT4).